The chain runs to 555 residues: Steroid-22-oyl-CoA synthetase (555 aa).

The protein belongs to the ATP-dependent AMP-binding enzyme family.

The catalysed reaction is 3-oxochol-4-en-22-oate + ATP + CoA = 3-oxochol-4-en-22-oyl-CoA + AMP + diphosphate. It carries out the reaction 3-hydroxy-9-oxo-9,10-seco-chola-1,3,5-trien-22-oate + ATP + CoA = 3-hydroxy-9-oxo-9,10-seco-chola-1,3,5-trien-22-oyl-CoA + AMP + diphosphate. It participates in steroid metabolism. Involved in cholate catabolism. Catalyzes the ATP-dependent formation of CoA thioesters of steroids with isopropanoyl side chains, likely occurring as degradation intermediates. Can use 4-BNC, HSBNC and HIDP as substrate. The chain is Steroid-22-oyl-CoA synthetase from Rhodococcus jostii (strain RHA1).